Reading from the N-terminus, the 1061-residue chain is Protein pid-5 (1061 aa).

The protein belongs to the peptidase M24B family. As to quaternary structure, may interact with pid-2, app-1 and prmt-5.

It is found in the cytoplasm. The protein localises to the perinuclear region. Its subcellular location is the P-body. Together with pid-4, it is involved in gene silencing mediated by a class of 21 nucleotide PIWI-interacting RNAs (piRNAs) that possess a uracil residue at the 5'-end (also called 21U-RNAs) and guide the Piwi protein prg-1 to its DNA targets for silencing. Together with pid-4, it is required for the biogenesis of secondary and tertiary 22G-siRNAs. Specifically, promotes the production of 22G-siRNAs from the 5' end of target mRNAs. Together with pid-4, plays a role in small RNA-directed transgenerational epigenetic inheritance (also called RNAe) over several generations and germline immortality. Together with pid-4, plays a role in the formation of liquid-like condensates in the cytoplasm called Z granules. The polypeptide is Protein pid-5 (Caenorhabditis elegans).